The following is a 253-amino-acid chain: Ribosomal RNA small subunit methyltransferase G (253 aa).

S-adenosyl-L-methionine contacts are provided by residues glycine 84, phenylalanine 89, 135–136 (AE), and arginine 154. The segment at 228 to 253 (TPAKYPRREGVPTHQPLFWKAKEQSR) is disordered.

Belongs to the methyltransferase superfamily. RNA methyltransferase RsmG family.

It localises to the cytoplasm. Its function is as follows. Specifically methylates the N7 position of a guanine in 16S rRNA. The polypeptide is Ribosomal RNA small subunit methyltransferase G (Deinococcus radiodurans (strain ATCC 13939 / DSM 20539 / JCM 16871 / CCUG 27074 / LMG 4051 / NBRC 15346 / NCIMB 9279 / VKM B-1422 / R1)).